A 276-amino-acid chain; its full sequence is Diaminopimelate epimerase (276 aa).

Residues Asn11, Gln44, and Asn64 each contribute to the substrate site. Cys73 functions as the Proton donor in the catalytic mechanism. Substrate is bound by residues 74-75 (GN), Asn157, Asn190, and 208-209 (ER). The active-site Proton acceptor is the Cys217. A substrate-binding site is contributed by 218–219 (GS).

Belongs to the diaminopimelate epimerase family. In terms of assembly, homodimer.

It is found in the cytoplasm. It carries out the reaction (2S,6S)-2,6-diaminopimelate = meso-2,6-diaminopimelate. It functions in the pathway amino-acid biosynthesis; L-lysine biosynthesis via DAP pathway; DL-2,6-diaminopimelate from LL-2,6-diaminopimelate: step 1/1. In terms of biological role, catalyzes the stereoinversion of LL-2,6-diaminopimelate (L,L-DAP) to meso-diaminopimelate (meso-DAP), a precursor of L-lysine and an essential component of the bacterial peptidoglycan. The protein is Diaminopimelate epimerase of Blochmanniella floridana.